The sequence spans 217 residues: MOB kinase activator 3A (217 aa).

Cys-83, Cys-88, His-165, and His-170 together coordinate Zn(2+).

It belongs to the MOB1/phocein family.

In terms of biological role, may regulate the activity of kinases. In Pongo abelii (Sumatran orangutan), this protein is MOB kinase activator 3A (MOB3A).